A 100-amino-acid polypeptide reads, in one-letter code: Integration host factor subunit alpha (100 aa).

The protein belongs to the bacterial histone-like protein family. Heterodimer of an alpha and a beta chain.

This protein is one of the two subunits of integration host factor, a specific DNA-binding protein that functions in genetic recombination as well as in transcriptional and translational control. The protein is Integration host factor subunit alpha of Ruegeria pomeroyi (strain ATCC 700808 / DSM 15171 / DSS-3) (Silicibacter pomeroyi).